Reading from the N-terminus, the 419-residue chain is GTPase Obg (419 aa).

Residues 1-156 (MRFVDYVSIE…FYLDLQLKVM (156 aa)) form the Obg domain. The OBG-type G domain maps to 157–334 (ADIGLVGKPN…LGEKQKKLEI (178 aa)). GTP contacts are provided by residues 163–170 (GKPNAGKS), 188–192 (FTTLA), 209–212 (DLPG), 278–281 (NKCD), and 315–317 (NII). Residues serine 170 and threonine 190 each contribute to the Mg(2+) site. Positions 342–419 (IEFNLKAPFL…RIYEFEFHWN (78 aa)) constitute an OCT domain.

It belongs to the TRAFAC class OBG-HflX-like GTPase superfamily. OBG GTPase family. Monomer. Mg(2+) serves as cofactor.

The protein resides in the cytoplasm. An essential GTPase which binds GTP, GDP and possibly (p)ppGpp with moderate affinity, with high nucleotide exchange rates and a fairly low GTP hydrolysis rate. Plays a role in control of the cell cycle, stress response, ribosome biogenesis and in those bacteria that undergo differentiation, in morphogenesis control. In Mesomycoplasma hyopneumoniae (strain J / ATCC 25934 / NCTC 10110) (Mycoplasma hyopneumoniae), this protein is GTPase Obg.